A 119-amino-acid polypeptide reads, in one-letter code: Large ribosomal subunit protein bL20 (119 aa).

The protein belongs to the bacterial ribosomal protein bL20 family.

In terms of biological role, binds directly to 23S ribosomal RNA and is necessary for the in vitro assembly process of the 50S ribosomal subunit. It is not involved in the protein synthesizing functions of that subunit. This Alcanivorax borkumensis (strain ATCC 700651 / DSM 11573 / NCIMB 13689 / SK2) protein is Large ribosomal subunit protein bL20.